A 2493-amino-acid chain; its full sequence is Non-reducing polyketide synthase pkiA (2493 aa).

Residues Pro-129 to Ile-243 are N-terminal acylcarrier protein transacylase domain (SAT). Cys-160 acts as the Nucleophile; for transacylase activity in catalysis. His-274 functions as the Proton donor/acceptor; for transacylase activity in the catalytic mechanism. Positions Glu-401 to Gln-818 constitute a Ketosynthase family 3 (KS3) domain. Active-site for beta-ketoacyl synthase activity residues include Cys-567, His-702, and His-741. The malonyl-CoA:ACP transacylase (MAT) stretch occupies residues Cys-926 to Tyr-1261. The segment at Pro-1259–Cys-1387 is N-terminal hotdog fold. One can recognise a PKS/mFAS DH domain in the interval Pro-1259–Thr-1562. Residue His-1291 is the Proton acceptor; for dehydratase activity of the active site. Residues Ala-1297–Lys-1558 are product template (PT) domain. The interval Val-1415–Thr-1562 is C-terminal hotdog fold. Residue Asp-1471 is the Proton donor; for dehydratase activity of the active site. The Carrier domain maps to Lys-1588 to Leu-1662. Ser-1622 is modified (O-(pantetheine 4'-phosphoryl)serine). Residues Arg-1822 to Glu-2063 form a methyltransferase (CMeT) domain region. An NADPH-binding domain region spans residues Val-2128–Ile-2366.

The cofactor is pantetheine 4'-phosphate.

It catalyses the reaction decanoyl-[ACP] + 4 malonyl-CoA + AH2 + S-adenosyl-L-methionine + 3 H(+) = 2,4-dihydroxy-3-methyl-6-(2-oxoundecyl)benzaldehyde + holo-[ACP] + A + S-adenosyl-L-homocysteine + 4 CO2 + 4 CoA + H2O. It functions in the pathway secondary metabolite biosynthesis. Functionally, non-reducing polyketide synthase; part of the pki gene cluster that mediates the biosynthesis of 2,4-dihydroxy-3-methyl-6-(2-oxoundecyl)benzaldehyde. The first step in the pathway is the generation of the decanoyl starter unit by the FAS composed of subunits pkiB and pkiC, which is then transferred directly from the FAS to the SAT domain of the non-reducing polyketide synthase pkiA. PkiA condenses the decanoyyl starter unit with 4 malonyl-CoA units and performs one methylation step to yield 2,4-dihydroxy-3-methyl-6-(2-oxoundecyl)benzaldehyde. The chain is Non-reducing polyketide synthase pkiA from Emericella nidulans (strain FGSC A4 / ATCC 38163 / CBS 112.46 / NRRL 194 / M139) (Aspergillus nidulans).